A 495-amino-acid polypeptide reads, in one-letter code: Bifunctional protein GlmU (495 aa).

Residues 1–241 are pyrophosphorylase; that stretch reads MTFPGDTAVL…SALVAGVNNR (241 aa). Residues 12–15, K26, Q83, 88–89, 112–114, G151, E166, N181, and N239 contribute to the UDP-N-acetyl-alpha-D-glucosamine site; these read LAAG, GT, and SGD. Residue D114 participates in Mg(2+) binding. N239 serves as a coordination point for Mg(2+). Residues 242–262 are linker; it reads VQLAELASELNRRVVAAHQLA. Positions 263-495 are N-acetyltransferase; that stretch reads GVTVVDPATT…TQPPDADQTP (233 aa). The UDP-N-acetyl-alpha-D-glucosamine site is built by R344 and K362. The Proton acceptor role is filled by H374. UDP-N-acetyl-alpha-D-glucosamine-binding residues include Y377 and N388. Acetyl-CoA contacts are provided by residues A391, 397 to 398, S416, and A434; that span reads NY. Positions 457–495 are disordered; it reads IENWVQRKRPGSPAAQASKRASEMACQQPTQPPDADQTP. Residues 483 to 495 are compositionally biased toward low complexity; sequence QQPTQPPDADQTP.

In the N-terminal section; belongs to the N-acetylglucosamine-1-phosphate uridyltransferase family. The protein in the C-terminal section; belongs to the transferase hexapeptide repeat family. As to quaternary structure, homotrimer. The cofactor is Mg(2+).

The protein localises to the cytoplasm. The enzyme catalyses alpha-D-glucosamine 1-phosphate + acetyl-CoA = N-acetyl-alpha-D-glucosamine 1-phosphate + CoA + H(+). It catalyses the reaction N-acetyl-alpha-D-glucosamine 1-phosphate + UTP + H(+) = UDP-N-acetyl-alpha-D-glucosamine + diphosphate. It functions in the pathway nucleotide-sugar biosynthesis; UDP-N-acetyl-alpha-D-glucosamine biosynthesis; N-acetyl-alpha-D-glucosamine 1-phosphate from alpha-D-glucosamine 6-phosphate (route II): step 2/2. Its pathway is nucleotide-sugar biosynthesis; UDP-N-acetyl-alpha-D-glucosamine biosynthesis; UDP-N-acetyl-alpha-D-glucosamine from N-acetyl-alpha-D-glucosamine 1-phosphate: step 1/1. It participates in bacterial outer membrane biogenesis; LPS lipid A biosynthesis. Its function is as follows. Catalyzes the last two sequential reactions in the de novo biosynthetic pathway for UDP-N-acetylglucosamine (UDP-GlcNAc). The C-terminal domain catalyzes the transfer of acetyl group from acetyl coenzyme A to glucosamine-1-phosphate (GlcN-1-P) to produce N-acetylglucosamine-1-phosphate (GlcNAc-1-P), which is converted into UDP-GlcNAc by the transfer of uridine 5-monophosphate (from uridine 5-triphosphate), a reaction catalyzed by the N-terminal domain. The chain is Bifunctional protein GlmU from Mycobacterium tuberculosis (strain ATCC 25177 / H37Ra).